The primary structure comprises 372 residues: E3 ubiquitin-protein ligase RNF34 (372 aa).

An FYVE-type zinc finger spans residues E56–E107. In terms of domain architecture, SAP 1 spans L115–I134. S169 carries the post-translational modification Phosphoserine. The tract at residues Q194–A253 is disordered. The span at D201–N220 shows a compositional bias: polar residues. Residues T221–A239 are compositionally biased toward acidic residues. Over residues E240–R252 the composition is skewed to basic and acidic residues. A phosphoserine mark is found at S254 and S256. An SAP 2 domain is found at V264–R278. The RING-type zinc-finger motif lies at C325 to R360.

As to quaternary structure, interacts with CASP8 and CASP10. Interacts (via RING-type zinc finger) with PPARGC1A. Interacts with NOD1. Interacts with p53/TP53; involved in p53/TP53 ubiquitination. Interacts (via RING-type zinc finger) with MDM2; the interaction stabilizes MDM2. Post-translationally, autoubiquitinated (in vitro). Proteolytically cleaved by caspases upon induction of apoptosis by TNF. As to expression, ubiquitous. Detected in heart, brain, liver, skeletal muscle, kidney, pancreas, spleen, thymus, prostate, testis, ovary, colon and leukocytes.

The protein resides in the cell membrane. It localises to the endomembrane system. The protein localises to the nucleus. It is found in the nucleus speckle. Its subcellular location is the cytoplasm. The protein resides in the cytosol. It carries out the reaction S-ubiquitinyl-[E2 ubiquitin-conjugating enzyme]-L-cysteine + [acceptor protein]-L-lysine = [E2 ubiquitin-conjugating enzyme]-L-cysteine + N(6)-ubiquitinyl-[acceptor protein]-L-lysine.. The protein operates within protein modification; protein ubiquitination. Its function is as follows. E3 ubiquitin-protein ligase that regulates several biological processes through the ubiquitin-mediated proteasomal degradation of various target proteins. Ubiquitinates the caspases CASP8 and CASP10, promoting their proteasomal degradation, to negatively regulate cell death downstream of death domain receptors in the extrinsic pathway of apoptosis. May mediate 'Lys-48'-linked polyubiquitination of RIPK1 and its subsequent proteasomal degradation thereby indirectly regulating the tumor necrosis factor-mediated signaling pathway. Negatively regulates p53/TP53 through its direct ubiquitination and targeting to proteasomal degradation. Indirectly, may also negatively regulate p53/TP53 through ubiquitination and degradation of SFN. Mediates PPARGC1A proteasomal degradation probably through ubiquitination thereby indirectly regulating the metabolism of brown fat cells. Possibly involved in innate immunity, through 'Lys-48'-linked polyubiquitination of NOD1 and its subsequent proteasomal degradation. This is E3 ubiquitin-protein ligase RNF34 from Homo sapiens (Human).